The sequence spans 418 residues: CinA-like protein (418 aa).

The protein belongs to the CinA family.

This Cytophaga hutchinsonii (strain ATCC 33406 / DSM 1761 / CIP 103989 / NBRC 15051 / NCIMB 9469 / D465) protein is CinA-like protein.